The following is a 243-amino-acid chain: Ubiquinone/menaquinone biosynthesis C-methyltransferase UbiE (243 aa).

S-adenosyl-L-methionine-binding positions include Thr-69, Asp-90, and 116–117; that span reads DA.

The protein belongs to the class I-like SAM-binding methyltransferase superfamily. MenG/UbiE family.

The enzyme catalyses a 2-demethylmenaquinol + S-adenosyl-L-methionine = a menaquinol + S-adenosyl-L-homocysteine + H(+). The catalysed reaction is a 2-methoxy-6-(all-trans-polyprenyl)benzene-1,4-diol + S-adenosyl-L-methionine = a 5-methoxy-2-methyl-3-(all-trans-polyprenyl)benzene-1,4-diol + S-adenosyl-L-homocysteine + H(+). It functions in the pathway quinol/quinone metabolism; menaquinone biosynthesis; menaquinol from 1,4-dihydroxy-2-naphthoate: step 2/2. The protein operates within cofactor biosynthesis; ubiquinone biosynthesis. In terms of biological role, methyltransferase required for the conversion of demethylmenaquinol (DMKH2) to menaquinol (MKH2) and the conversion of 2-polyprenyl-6-methoxy-1,4-benzoquinol (DDMQH2) to 2-polyprenyl-3-methyl-6-methoxy-1,4-benzoquinol (DMQH2). The sequence is that of Ubiquinone/menaquinone biosynthesis C-methyltransferase UbiE from Paraburkholderia phytofirmans (strain DSM 17436 / LMG 22146 / PsJN) (Burkholderia phytofirmans).